Here is a 165-residue protein sequence, read N- to C-terminus: PTS system glucose-specific EIIA component (165 aa).

Residues 33–137 form the PTS EIIA type-1 domain; that stretch reads DPVFAGRMMG…STITPIVITN (105 aa). Positions 70 and 85 each coordinate Zn(2+). H85 functions as the Tele-phosphohistidine intermediate; for EIIA activity in the catalytic mechanism. H85 bears the Phosphohistidine; by HPr mark.

In terms of assembly, heterodimer with glycerol kinase (glpk). Requires Zn(2+) as cofactor.

It localises to the cytoplasm. The phosphoenolpyruvate-dependent sugar phosphotransferase system (sugar PTS), a major carbohydrate active transport system, catalyzes the phosphorylation of incoming sugar substrates concomitantly with their translocation across the cell membrane. The enzyme II complex composed of PtsG and Crr is involved in glucose transport. This chain is PTS system glucose-specific EIIA component (crr), found in Bacillus cereus (strain ATCC 14579 / DSM 31 / CCUG 7414 / JCM 2152 / NBRC 15305 / NCIMB 9373 / NCTC 2599 / NRRL B-3711).